The sequence spans 396 residues: 1-deoxy-D-xylulose 5-phosphate reductoisomerase (396 aa).

Threonine 14, glycine 15, serine 16, isoleucine 17, glycine 40, and asparagine 128 together coordinate NADPH. Lysine 129 contacts 1-deoxy-D-xylulose 5-phosphate. Glutamate 130 serves as a coordination point for NADPH. Aspartate 154 contributes to the Mn(2+) binding site. The 1-deoxy-D-xylulose 5-phosphate site is built by serine 155, glutamate 156, serine 180, and histidine 203. Mn(2+) is bound at residue glutamate 156. Glycine 209 contributes to the NADPH binding site. Positions 216, 221, 222, and 225 each coordinate 1-deoxy-D-xylulose 5-phosphate. Residue glutamate 225 participates in Mn(2+) binding.

It belongs to the DXR family. Mg(2+) serves as cofactor. Requires Mn(2+) as cofactor.

It carries out the reaction 2-C-methyl-D-erythritol 4-phosphate + NADP(+) = 1-deoxy-D-xylulose 5-phosphate + NADPH + H(+). The protein operates within isoprenoid biosynthesis; isopentenyl diphosphate biosynthesis via DXP pathway; isopentenyl diphosphate from 1-deoxy-D-xylulose 5-phosphate: step 1/6. Its function is as follows. Catalyzes the NADPH-dependent rearrangement and reduction of 1-deoxy-D-xylulose-5-phosphate (DXP) to 2-C-methyl-D-erythritol 4-phosphate (MEP). The chain is 1-deoxy-D-xylulose 5-phosphate reductoisomerase from Xylella fastidiosa (strain 9a5c).